An 838-amino-acid polypeptide reads, in one-letter code: Leucine--tRNA ligase (838 aa).

Positions Pro-36 to His-46 match the 'HIGH' region motif. The 'KMSKS' region motif lies at Lys-611–Ser-615. Position 614 (Lys-614) interacts with ATP.

The protein belongs to the class-I aminoacyl-tRNA synthetase family.

The protein resides in the cytoplasm. It catalyses the reaction tRNA(Leu) + L-leucine + ATP = L-leucyl-tRNA(Leu) + AMP + diphosphate. The sequence is that of Leucine--tRNA ligase from Wolbachia sp. subsp. Drosophila simulans (strain wRi).